The primary structure comprises 149 residues: Nascent polypeptide-associated complex subunit beta-2 (149 aa).

Residues 38–103 (DKDNTKLQAE…PKENTLNGLY (66 aa)) form the NAC-A/B domain.

The protein belongs to the NAC-beta family. In terms of assembly, part of the nascent polypeptide-associated complex (NAC), consisting of EGD2 and either EGD1 or BTT1. NAC associates with ribosomes via EGD1 or BTT1.

The protein resides in the cytoplasm. It localises to the nucleus. Functionally, acts as a component of the nascent polypeptide-associated complex (NAC), which promotes mitochondrial protein import by enhancing productive ribosome interactions with the outer mitochondrial membrane. Also blocks the inappropriate interaction of ribosomes translating non-secretory nascent polypeptides with translocation sites in the membrane of the endoplasmic reticulum. BTT1 may act as a transcription factor that exert a negative effect on the expression of several genes that are transcribed by RNA polymerase II. This chain is Nascent polypeptide-associated complex subunit beta-2 (BTT1), found in Saccharomyces cerevisiae (strain YJM789) (Baker's yeast).